A 253-amino-acid chain; its full sequence is Major prion protein (253 aa).

The signal sequence occupies residues 1 to 22; sequence MANLGCWMLVLFVATWSNLGLC. The interaction with ADGRG6 stretch occupies residues 23-38; the sequence is KKRPKPGGWNTGGSRY. An interaction with GRB2, ERI3 and SYN1 region spans residues 23–230; it reads KKRPKPGGWN…ESQAYYQRGS (208 aa). The interval 25-108 is disordered; it reads RPKPGGWNTG…WNKPSKPKTN (84 aa). 5 repeat units span residues 51-59, 60-67, 68-75, 76-83, and 84-91. Residues 51-91 are 5 X 8 AA tandem repeats of P-H-G-G-G-W-G-Q; sequence PQGGGGWGQPHGGGWGQPHGGGWGQPHGGGWGQPHGGGWGQ. Residues 52–95 show a composition bias toward gly residues; sequence QGGGGWGQPHGGGWGQPHGGGWGQPHGGGWGQPHGGGWGQGGGT. Cu(2+) is bound by residues His-61, Gly-62, Gly-63, His-69, Gly-70, Gly-71, His-77, Gly-78, Gly-79, His-85, Gly-86, and Gly-87. Cys-179 and Cys-214 form a disulfide bridge. Residues Asn-181 and Asn-197 are each glycosylated (N-linked (GlcNAc...) asparagine). A lipid anchor (GPI-anchor amidated serine) is attached at Ser-230. A propeptide spans 231–253 (removed in mature form); the sequence is SMVLFSSPPVILLISFLIFLIVG.

It belongs to the prion family. As to quaternary structure, monomer and homodimer. Has a tendency to aggregate into amyloid fibrils containing a cross-beta spine, formed by a steric zipper of superposed beta-strands. Soluble oligomers may represent an intermediate stage on the path to fibril formation. Copper binding may promote oligomerization. Interacts with GRB2, APP, ERI3/PRNPIP and SYN1. Mislocalized cytosolically exposed PrP interacts with MGRN1; this interaction alters MGRN1 subcellular location and causes lysosomal enlargement. Interacts with APP. Interacts with KIAA1191. Interacts with ADGRG6.

The protein localises to the cell membrane. It localises to the golgi apparatus. Functionally, its primary physiological function is unclear. May play a role in neuronal development and synaptic plasticity. May be required for neuronal myelin sheath maintenance. May promote myelin homeostasis through acting as an agonist for ADGRG6 receptor. May play a role in iron uptake and iron homeostasis. Soluble oligomers are toxic to cultured neuroblastoma cells and induce apoptosis (in vitro). Association with GPC1 (via its heparan sulfate chains) targets PRNP to lipid rafts. Also provides Cu(2+) or Zn(2+) for the ascorbate-mediated GPC1 deaminase degradation of its heparan sulfate side chains. This Pongo pygmaeus (Bornean orangutan) protein is Major prion protein (PRNP).